We begin with the raw amino-acid sequence, 66 residues long: Kunitz-type serine protease inhibitor Vur-KIn (66 aa).

Position 1 is a pyrrolidone carboxylic acid (Q1). The region spanning 7 to 57 is the BPTI/Kunitz inhibitor domain; it reads CYLPADPGICKAHKPRFYYNPASNKCKEFFYGGCGGNANNFKTRDECHHTC. Cystine bridges form between C7–C57, C16–C40, and C32–C53. The propeptide occupies 62–66; it reads MGRPT.

It belongs to the venom Kunitz-type family. As to expression, expressed by the venom gland.

The protein resides in the secreted. Functionally, serine protease inhibitor. In Vipera renardi (Steppe viper), this protein is Kunitz-type serine protease inhibitor Vur-KIn.